The following is a 302-amino-acid chain: GTPase Era (302 aa).

Positions 8 to 175 (HSGFVAIIGR…LTTLKGQLPE (168 aa)) constitute an Era-type G domain. Residues 16–23 (GRPNVGKS) are G1. 16–23 (GRPNVGKS) contributes to the GTP binding site. The segment at 42–46 (QTTRN) is G2. Residues 63-66 (DTPG) are G3. GTP is bound by residues 63-67 (DTPGI) and 125-128 (NKID). Residues 125–128 (NKID) are G4. Residues 154–156 (ISA) are G5. One can recognise a KH type-2 domain in the interval 206 to 283 (TRQEVPHSTA…YLELWVKVQE (78 aa)).

It belongs to the TRAFAC class TrmE-Era-EngA-EngB-Septin-like GTPase superfamily. Era GTPase family. Monomer.

It localises to the cytoplasm. The protein localises to the cell membrane. Its function is as follows. An essential GTPase that binds both GDP and GTP, with rapid nucleotide exchange. Plays a role in 16S rRNA processing and 30S ribosomal subunit biogenesis and possibly also in cell cycle regulation and energy metabolism. In Lactiplantibacillus plantarum (strain ATCC BAA-793 / NCIMB 8826 / WCFS1) (Lactobacillus plantarum), this protein is GTPase Era.